The following is a 735-amino-acid chain: Probable E3 ubiquitin-protein ligase MID2 (735 aa).

The segment at 30–80 (CPICLELFEDPLLLPCAHSLCFSCAHRILVSSCSSGESIEPITAFQCPTCR) adopts an RING-type zinc-finger fold. The B box-type 1; degenerate zinc finger occupies 137–184 (IACQFCEQDPPRDAVKTCITCEVSYCDRCLRATHPNKKPFTSHRLVEP). The segment at 190 to 232 (LRGITCLDHENEKVNMYCVSDDQLICALCKLVGRHRDHQVASL) adopts a B box-type 2 zinc-finger fold. Zn(2+) is bound by residues cysteine 195, histidine 198, cysteine 218, and histidine 224. Positions 233–301 (NDRFEKLKQT…IIQQRKQMIA (69 aa)) form a coiled coil. A COS domain is found at 340-399 (LKENDQARFLQSAKNIAERVAMATASSQVLIPDINFNDAFENFALDFSREKKLLEGLDYL). The 134-residue stretch at 398 to 531 (YLTAPNPPSI…RNSEPTRLKT (134 aa)) folds into the Fibronectin type-III domain. A B30.2/SPRY domain is found at 516-709 (INQAGSRNSE…ILSGLPAPDF (194 aa)).

The protein belongs to the TRIM/RBCC family. As to quaternary structure, homodimer or heterodimer with MID1. Interacts with IGBP1. Post-translationally, phosphorylated on serine and threonine residues. Low level in fetal kidney and lung, and in adult prostate, ovary and small intestine.

The protein resides in the cytoplasm. Its subcellular location is the cytoskeleton. The enzyme catalyses S-ubiquitinyl-[E2 ubiquitin-conjugating enzyme]-L-cysteine + [acceptor protein]-L-lysine = [E2 ubiquitin-conjugating enzyme]-L-cysteine + N(6)-ubiquitinyl-[acceptor protein]-L-lysine.. Its pathway is protein modification; protein ubiquitination. Its function is as follows. E3 ubiquitin ligase that plays a role in microtubule stabilization. Mediates the 'Lys-48'-linked polyubiquitination of LRRK2 to drive its localization to microtubules and its proteasomal degradation in neurons. This ubiquitination inhibits LRRK2 kinase activation by RAB29. The polypeptide is Probable E3 ubiquitin-protein ligase MID2 (MID2) (Homo sapiens (Human)).